A 552-amino-acid polypeptide reads, in one-letter code: Putative transport protein Spro_0050 (552 aa).

6 consecutive transmembrane segments (helical) span residues 4 to 24, 26 to 46, 65 to 85, 96 to 116, 117 to 137, and 158 to 178; these read IALT…MGNW, IYGV…VGHF, FGLI…FFSS, FAIL…KLFA, VPLP…PALG, and MGYA…MWLI. 2 RCK C-terminal domains span residues 192-276 and 279-361; these read AFAS…VIGE and DVSL…IVGN. The next 6 helical transmembrane spans lie at 371–391, 393–413, 439–459, 464–484, 493–513, and 530–550; these read MLPV…PLFI, GFPA…ALIL, IVLF…DTLI, LAWI…VGVL, YLTL…LAFA, and VYPL…VLFW.

This sequence belongs to the AAE transporter (TC 2.A.81) family. YidE subfamily.

It is found in the cell membrane. The polypeptide is Putative transport protein Spro_0050 (Serratia proteamaculans (strain 568)).